We begin with the raw amino-acid sequence, 392 residues long: uncharacterized protein (392 aa).

The protein belongs to the ROK (NagC/XylR) family.

This is an uncharacterized protein from Sinorhizobium fredii (strain NBRC 101917 / NGR234).